The primary structure comprises 322 residues: uncharacterized protein (322 aa).

The disordered stretch occupies residues 277-322; it reads LVTYGGKDGPSDNEDGPSDDEDGPSDDEEGLSKDGVSEYYQSDLDD. Over residues 287–305 the composition is skewed to acidic residues; sequence SDNEDGPSDDEDGPSDDEE.

This is an uncharacterized protein from Frog virus 3 (isolate Goorha) (FV-3).